The following is a 141-amino-acid chain: Nucleoside diphosphate kinase (141 aa).

ATP is bound by residues lysine 11, phenylalanine 59, arginine 87, threonine 93, arginine 104, and asparagine 114. The active-site Pros-phosphohistidine intermediate is histidine 117.

It belongs to the NDK family. In terms of assembly, homotetramer. Mg(2+) is required as a cofactor.

The protein resides in the cytoplasm. It catalyses the reaction a 2'-deoxyribonucleoside 5'-diphosphate + ATP = a 2'-deoxyribonucleoside 5'-triphosphate + ADP. It carries out the reaction a ribonucleoside 5'-diphosphate + ATP = a ribonucleoside 5'-triphosphate + ADP. Functionally, major role in the synthesis of nucleoside triphosphates other than ATP. The ATP gamma phosphate is transferred to the NDP beta phosphate via a ping-pong mechanism, using a phosphorylated active-site intermediate. The protein is Nucleoside diphosphate kinase of Herminiimonas arsenicoxydans.